The following is a 368-amino-acid chain: 3-dehydroquinate synthase (368 aa).

NAD(+) is bound by residues 69–74 (DGEAYK), 103–107 (GVIGD), 127–128 (TT), lysine 140, and lysine 149. 3 residues coordinate Zn(2+): glutamate 182, histidine 245, and histidine 262.

Belongs to the sugar phosphate cyclases superfamily. Dehydroquinate synthase family. Co(2+) is required as a cofactor. The cofactor is Zn(2+). It depends on NAD(+) as a cofactor.

The protein resides in the cytoplasm. The catalysed reaction is 7-phospho-2-dehydro-3-deoxy-D-arabino-heptonate = 3-dehydroquinate + phosphate. The protein operates within metabolic intermediate biosynthesis; chorismate biosynthesis; chorismate from D-erythrose 4-phosphate and phosphoenolpyruvate: step 2/7. Its function is as follows. Catalyzes the conversion of 3-deoxy-D-arabino-heptulosonate 7-phosphate (DAHP) to dehydroquinate (DHQ). The protein is 3-dehydroquinate synthase of Pseudomonas aeruginosa (strain UCBPP-PA14).